A 422-amino-acid polypeptide reads, in one-letter code: 5-hydroxytryptamine receptor 1A (422 aa).

Residues 1–23 (MDVLSPGQGNNTTSPPAPFETGG) form a disordered region. Over 1–38 (MDVLSPGQGNNTTSPPAPFETGGNTTGISDVTFSYQVI) the chain is Extracellular. Residues N10, N11, and N24 are each glycosylated (N-linked (GlcNAc...) asparagine). Residues 39–59 (TSLLLGTLIFCAVLGNACVVA) form a helical membrane-spanning segment. The Cytoplasmic segment spans residues 60-73 (AIALERSLQNVANY). The helical transmembrane segment at 74 to 98 (LIGSLAVTDLMVSVLVLPMAALYQV) threads the bilayer. Residues 99 to 107 (LNKWTLGQV) lie on the Extracellular side of the membrane. A helical membrane pass occupies residues 108–132 (TCDLFIALDVLCCTSSILHLCAIAL). The cysteines at positions 109 and 187 are disulfide-linked. D116 and C120 together coordinate serotonin. Residues 133–135 (DRY) carry the DRY motif; important for ligand-induced conformation changes motif. The Cytoplasmic segment spans residues 133 to 152 (DRYWAITDPIDYVNKRTPRR). The helical transmembrane segment at 153–174 (AAALISLTWLIGFLISIPPMLG) threads the bilayer. The Extracellular segment spans residues 175-193 (WRTPEDRSDPDACTISKDH). A helical membrane pass occupies residues 194-216 (GYTIYSTFGAFYIPLLLMLVLYG). Residues 217–346 (RIFRAARFRI…LARERKTVKT (130 aa)) are Cytoplasmic-facing. Residues 235 to 263 (KTGADTHHGASPAPQPKKSVNGESGSRNW) form a disordered region. Positions 314, 345, 346, and 352 each coordinate 1D-myo-inositol 4-phosphate. A helical membrane pass occupies residues 347-370 (LGIIMGTFILCWLPFFIVALVLPF). The Extracellular segment spans residues 371-378 (CESSCHMP). Residues 379–403 (TLLGAIINWLGYSNSLLNPVIYAYF) traverse the membrane as a helical segment. The NPxxY motif; important for ligand-induced conformation changes and signaling signature appears at 396–400 (NPVIY). 1D-myo-inositol 4-phosphate is bound by residues F403, N404, and K405. Over 404–422 (NKDFQNAFKKIIKCKFCRQ) the chain is Cytoplasmic.

It belongs to the G-protein coupled receptor 1 family. 5-hydroxytryptamine receptor subfamily. HTR1A sub-subfamily. Heterodimer; heterodimerizes with GPER1. Interacts with YIF1B. Interacts with GPR39 and GALR1.

Its subcellular location is the cell membrane. The protein localises to the cell projection. It localises to the dendrite. G-protein coupled receptor activity is regulated by lipids: phosphatidylinositol 4-phosphate increases HTR1A-mediated activity. G-protein coupled receptor for 5-hydroxytryptamine (serotonin). Also functions as a receptor for various drugs and psychoactive substances. Ligand binding causes a conformation change that triggers signaling via guanine nucleotide-binding proteins (G proteins) and modulates the activity of downstream effectors, such as adenylate cyclase. HTR1A is coupled to G(i)/G(o) G alpha proteins and mediates inhibitory neurotransmission: signaling inhibits adenylate cyclase activity and activates a phosphatidylinositol-calcium second messenger system that regulates the release of Ca(2+) ions from intracellular stores. Beta-arrestin family members regulate signaling by mediating both receptor desensitization and resensitization processes. The polypeptide is 5-hydroxytryptamine receptor 1A (HTR1A) (Pongo pygmaeus (Bornean orangutan)).